The following is a 508-amino-acid chain: PTS system mannitol-specific EIICB component (508 aa).

Residues Met-1–Asn-30 lie on the Cytoplasmic side of the membrane. A PTS EIIC type-2 domain is found at Phe-19–Asp-351. Residues Ile-31–Asn-52 traverse the membrane as a helical segment. The Extracellular portion of the chain corresponds to Lys-53 to Ser-56. The helical transmembrane segment at Glu-57–Arg-77 threads the bilayer. Over Leu-78–Phe-141 the chain is Cytoplasmic. Residues Ser-142 to Glu-163 traverse the membrane as a helical segment. Residues Phe-164–Ala-172 are Extracellular-facing. Residues Val-173 to Lys-193 traverse the membrane as a helical segment. The Cytoplasmic portion of the chain corresponds to Ile-194–Ala-280. The chain crosses the membrane as a helical span at residues Val-281–Lys-300. Residues Ser-301–Phe-320 lie on the Extracellular side of the membrane. The helical transmembrane segment at Leu-321–Leu-342 threads the bilayer. Residues Lys-343–Lys-508 lie on the Cytoplasmic side of the membrane. The segment at Ala-355–Glu-400 is disordered. Over residues Ser-367–Glu-392 the composition is skewed to low complexity. The region spanning Asn-420–Lys-508 is the PTS EIIB type-2 domain. The Phosphocysteine intermediate; for EIIB activity role is filled by Cys-426. A Phosphocysteine; by EIIA modification is found at Cys-426.

Homodimer.

The protein resides in the cell membrane. The enzyme catalyses D-mannitol(out) + N(pros)-phospho-L-histidyl-[protein] = D-mannitol 1-phosphate(in) + L-histidyl-[protein]. Its function is as follows. The phosphoenolpyruvate-dependent sugar phosphotransferase system (sugar PTS), a major carbohydrate active transport system, catalyzes the phosphorylation of incoming sugar substrates concomitantly with their translocation across the cell membrane. The enzyme II CmtAB PTS system is involved in D-mannitol transport. The protein is PTS system mannitol-specific EIICB component (mtlA) of Staphylococcus saprophyticus subsp. saprophyticus (strain ATCC 15305 / DSM 20229 / NCIMB 8711 / NCTC 7292 / S-41).